We begin with the raw amino-acid sequence, 352 residues long: C-glycoside deglycosidase alpha subunit (352 aa).

Residue Glu-147 coordinates Mn(2+). The active-site Proton acceptor is the His-149. Residues Asp-179, His-269, and Glu-305 each coordinate Mn(2+).

This sequence belongs to the C-glycoside deglycosidase alpha subunit family. In terms of assembly, heterodimer composed of an alpha subunit (CarB2) and a beta subunit (CarC2). A divalent metal cation serves as cofactor.

The enzyme catalyses 3''-dehydroorientin = 1,5-anhydro-D-erythro-hex-1-en-3-ulose + luteolin. Its activity is regulated as follows. Activity is strongly reduced in the presence of chelating agents. Functionally, carbon-carbon bond-cleaving enzyme which participates in the metabolism of C-glycosides. Acts on the C8-glycosylated compound 3''-dehydroorientin (3''-oxo-orientin). This is C-glycoside deglycosidase alpha subunit from Arthrobacter globiformis (strain ATCC 8010 / DSM 20124 / JCM 1332 / NBRC 12137 / NCIMB 8907 / NRRL B-2979 / 168).